Reading from the N-terminus, the 196-residue chain is Large ribosomal subunit protein uL6 (196 aa).

This sequence belongs to the universal ribosomal protein uL6 family. As to quaternary structure, part of the 50S ribosomal subunit.

In terms of biological role, this protein binds to the 23S rRNA, and is important in its secondary structure. It is located near the subunit interface in the base of the L7/L12 stalk, and near the tRNA binding site of the peptidyltransferase center. The protein is Large ribosomal subunit protein uL6 of Pyrobaculum aerophilum (strain ATCC 51768 / DSM 7523 / JCM 9630 / CIP 104966 / NBRC 100827 / IM2).